A 370-amino-acid chain; its full sequence is UDP-galactose transporter homolog 1 (370 aa).

The next 10 membrane-spanning stretches (helical) occupy residues 22–42 (ALTL…WSIL), 62–82 (IIIN…YNYV), 115–135 (CNVL…SPIG), 145–165 (LAYL…HFIF), 175–195 (YLVA…HVTT), 204–224 (TLLG…TNST), 242–262 (LMSL…IIFH), 280–300 (LIDI…IFII), 307–327 (IILI…SVIL), and 333–353 (SWEQ…EAFI).

This sequence belongs to the nucleotide-sugar transporter family. SLC35B subfamily.

Its subcellular location is the endoplasmic reticulum membrane. Its function is as follows. May be involved in specific transport of UDP-Gal from the cytosol to the Golgi lumen. Involved in the maintenance of optimal conditions for the folding of secretory pathway proteins in the endoplasmic reticulum. The polypeptide is UDP-galactose transporter homolog 1 (HUT1) (Candida albicans (strain SC5314 / ATCC MYA-2876) (Yeast)).